Consider the following 544-residue polypeptide: Membrane protein insertase YidC (544 aa).

Residues Thr29–Ser58 are disordered. A compositionally biased stretch (polar residues) spans Ser35–Ser46. 3 helical membrane-spanning segments follow: residues Phe341–Ile361, Gly421–Leu441, and Pro499–Val519.

The protein belongs to the OXA1/ALB3/YidC family. Type 1 subfamily. Interacts with the Sec translocase complex via SecD. Specifically interacts with transmembrane segments of nascent integral membrane proteins during membrane integration.

It localises to the cell inner membrane. Functionally, required for the insertion and/or proper folding and/or complex formation of integral membrane proteins into the membrane. Involved in integration of membrane proteins that insert both dependently and independently of the Sec translocase complex, as well as at least some lipoproteins. Aids folding of multispanning membrane proteins. The protein is Membrane protein insertase YidC of Pseudoalteromonas translucida (strain TAC 125).